The sequence spans 700 residues: Elongation factor G (700 aa).

One can recognise a tr-type G domain in the interval 8-290 (ERYRNIGISA…AVIDYLPSPV (283 aa)). GTP contacts are provided by residues 17-24 (AHIDAGKT), 88-92 (DTPGH), and 142-145 (NKMD).

This sequence belongs to the TRAFAC class translation factor GTPase superfamily. Classic translation factor GTPase family. EF-G/EF-2 subfamily.

The protein resides in the cytoplasm. Its function is as follows. Catalyzes the GTP-dependent ribosomal translocation step during translation elongation. During this step, the ribosome changes from the pre-translocational (PRE) to the post-translocational (POST) state as the newly formed A-site-bound peptidyl-tRNA and P-site-bound deacylated tRNA move to the P and E sites, respectively. Catalyzes the coordinated movement of the two tRNA molecules, the mRNA and conformational changes in the ribosome. The polypeptide is Elongation factor G (Leptothrix cholodnii (strain ATCC 51168 / LMG 8142 / SP-6) (Leptothrix discophora (strain SP-6))).